The chain runs to 219 residues: Mediator of RNA polymerase II transcription subunit 20b (219 aa).

Belongs to the Mediator complex subunit 20 family. In terms of assembly, component of the Mediator complex.

It localises to the nucleus. In terms of biological role, component of the Mediator complex, a coactivator involved in the regulated transcription of nearly all RNA polymerase II-dependent genes. Mediator functions as a bridge to convey information from gene-specific regulatory proteins to the basal RNA polymerase II transcription machinery. The Mediator complex, having a compact conformation in its free form, is recruited to promoters by direct interactions with regulatory proteins and serves for the assembly of a functional preinitiation complex with RNA polymerase II and the general transcription factors. The polypeptide is Mediator of RNA polymerase II transcription subunit 20b (MED20B) (Arabidopsis thaliana (Mouse-ear cress)).